The sequence spans 360 residues: Phospho-N-acetylmuramoyl-pentapeptide-transferase (360 aa).

The Periplasmic segment spans residues 1 to 25 (MLVWLAEHLVKYYSGFNVFSYLTFR). Residues 26–46 (AIVSLLTALFISLWMGPRMIA) form a helical membrane-spanning segment. The Cytoplasmic portion of the chain corresponds to 47 to 71 (HLQKLSFGQVVRNDGPESHFSKRGT). A helical membrane pass occupies residues 72–92 (PTMGGIMILTAIVISVLLWAY). Position 93 (P93) is a topological domain, periplasmic. The chain crosses the membrane as a helical span at residues 94-114 (SNPYVWCVLVVLVGYGIIGFV). Topologically, residues 115 to 131 (DDYRKVVRKDTKGLIAR) are cytoplasmic. A helical membrane pass occupies residues 132-152 (WKYFWMSVIALGVAFALYLAG). Residues 153–167 (KDTPATQLVVPFFKD) are Periplasmic-facing. A helical transmembrane segment spans residues 168 to 188 (VMPQLGLFYILLAYFVIVGTG). The Cytoplasmic portion of the chain corresponds to 189-198 (NAVNLTDGLD). A helical transmembrane segment spans residues 199–219 (GLAIMPTVFVAGGFALVAWAT). The Periplasmic segment spans residues 220-235 (GNMNFASYLHIPYLRH). Residues 236-256 (AGELVIVCTAIVGAGLGFLWF) traverse the membrane as a helical segment. The Cytoplasmic portion of the chain corresponds to 257-262 (NTYPAQ). The chain crosses the membrane as a helical span at residues 263–283 (VFMGDVGSLALGGALGIIAVL). The Periplasmic portion of the chain corresponds to 284 to 287 (LRQE). The chain crosses the membrane as a helical span at residues 288-308 (FLLVIMGGVFVVETLSVILQV). Residues 309-337 (GSFKLRGQRIFRMAPIHHHYELKGWPEPR) lie on the Cytoplasmic side of the membrane. The helical transmembrane segment at 338–358 (VIVRFWIISLMLVLIGLATLK) threads the bilayer. Topologically, residues 359–360 (VR) are periplasmic.

The protein belongs to the glycosyltransferase 4 family. MraY subfamily. Mg(2+) serves as cofactor.

It is found in the cell inner membrane. The enzyme catalyses UDP-N-acetyl-alpha-D-muramoyl-L-alanyl-gamma-D-glutamyl-meso-2,6-diaminopimeloyl-D-alanyl-D-alanine + di-trans,octa-cis-undecaprenyl phosphate = di-trans,octa-cis-undecaprenyl diphospho-N-acetyl-alpha-D-muramoyl-L-alanyl-D-glutamyl-meso-2,6-diaminopimeloyl-D-alanyl-D-alanine + UMP. It participates in cell wall biogenesis; peptidoglycan biosynthesis. Catalyzes the initial step of the lipid cycle reactions in the biosynthesis of the cell wall peptidoglycan: transfers peptidoglycan precursor phospho-MurNAc-pentapeptide from UDP-MurNAc-pentapeptide onto the lipid carrier undecaprenyl phosphate, yielding undecaprenyl-pyrophosphoryl-MurNAc-pentapeptide, known as lipid I. The protein is Phospho-N-acetylmuramoyl-pentapeptide-transferase of Escherichia coli O7:K1 (strain IAI39 / ExPEC).